A 336-amino-acid polypeptide reads, in one-letter code: Ferredoxin--NADP reductase 1 (336 aa).

Positions 37, 45, 50, 90, 125, 287, and 328 each coordinate FAD.

Belongs to the ferredoxin--NADP reductase type 2 family. In terms of assembly, homodimer. FAD is required as a cofactor.

The catalysed reaction is 2 reduced [2Fe-2S]-[ferredoxin] + NADP(+) + H(+) = 2 oxidized [2Fe-2S]-[ferredoxin] + NADPH. The sequence is that of Ferredoxin--NADP reductase 1 from Bacillus velezensis (strain DSM 23117 / BGSC 10A6 / LMG 26770 / FZB42) (Bacillus amyloliquefaciens subsp. plantarum).